Reading from the N-terminus, the 591-residue chain is MSEPAIARLIGEGVERPEASLPIDINYAKLTEWLVTRQKIPKDWHKRLQVIQAKAAEAVKELPPGTLSSLTDGADAPVDYMRAVEIRDKLASTSERTMFGGLQGPAATWDKIVKAYEKQFVYLGEAGQCLVQNVDFEIPYLRRNAAKLAGQLADGERKQGEYTRAAAACAAKYKEECKKLGISGAAVRAELRALAGELPGLLRGVVDSLHQPRLQEAAEYYAAFTRFAHAPRAGAPSSAKGPASSASAPPALEPESMLPVLFEIRNRRTAPPEAESGAAGAGASGQGGGIEIDWGDSGGDAGGAGVAAIDIDWDAPTAAPEGDAAAAAGPAVDINWDFDMADLAAAAGDDAGGTAAAPTADASAGPVGIDWDIEVDAAGDAAADANNRAGDVAEGEAAASLSGGGGGGASSGDPDDVAAARLERDADYRARLVDDLTELRAFLAQRKSDLAAGGSELTATALPDAVSSVDAAAVASMLGSVQAVLGQLGTPRFRQLLLIATSPRYLDRLEARLQRQAGAEAKMLAAAAEAVARQHEARAGLAAQAPRTAALVARCRRLKGVVERGIAASLGGKRSVNVLGEINNVLASAGQ.

The segment covering 232 to 250 (RAGAPSSAKGPASSASAPP) has biased composition (low complexity). Disordered stretches follow at residues 232-252 (RAGAPSSAKGPASSASAPPAL) and 269-303 (TAPPEAESGAAGAGASGQGGGIEIDWGDSGGDAGG). The segment covering 279-303 (AGAGASGQGGGIEIDWGDSGGDAGG) has biased composition (gly residues). 3 short sequence motifs (shuffled ATG8-binding motif) span residues 311-314 (IDWD), 334-337 (INWD), and 369-372 (IDWD). The segment covering 386–401 (NNRAGDVAEGEAAASL) has biased composition (low complexity). The segment at 386-416 (NNRAGDVAEGEAAASLSGGGGGGASSGDPDD) is disordered.

The protein belongs to the CDK5RAP3 family. As to quaternary structure, substrate adapter component of the UFM1 ribosome E3 ligase (UREL) complex. Interacts with ATG8 family proteins.

Substrate adapter of E3 ligase complexes mediating ufmylation, the covalent attachment of the ubiquitin-like modifier UFM1 to substrate proteins, and which is involved in various processes, such as ribosome recycling and reticulophagy (also called ER-phagy). In Chlamydomonas reinhardtii (Chlamydomonas smithii), this protein is CDK5RAP3 protein homolog.